The sequence spans 382 residues: Lactaldehyde reductase (382 aa).

NAD(+) contacts are provided by residues Asp-38, Asn-70, Gly-97–Ser-98, Thr-139–Thr-143, Asn-150, Lys-161, and Met-180–Met-184. Fe cation-binding residues include Asp-195, His-199, His-262, and His-276.

It belongs to the iron-containing alcohol dehydrogenase family. Homodimer. Requires Fe cation as cofactor.

The catalysed reaction is (R)-propane-1,2-diol + NAD(+) = (R)-lactaldehyde + NADH + H(+). It carries out the reaction (S)-propane-1,2-diol + NAD(+) = (S)-lactaldehyde + NADH + H(+). The protein operates within carbohydrate degradation; L-fucose degradation. The protein is Lactaldehyde reductase (fucO) of Escherichia coli O157:H7.